The primary structure comprises 211 residues: Protein-L-isoaspartate O-methyltransferase (211 aa).

Residue Ser62 is part of the active site.

The protein belongs to the methyltransferase superfamily. L-isoaspartyl/D-aspartyl protein methyltransferase family.

The protein resides in the cytoplasm. The catalysed reaction is [protein]-L-isoaspartate + S-adenosyl-L-methionine = [protein]-L-isoaspartate alpha-methyl ester + S-adenosyl-L-homocysteine. In terms of biological role, catalyzes the methyl esterification of L-isoaspartyl residues in peptides and proteins that result from spontaneous decomposition of normal L-aspartyl and L-asparaginyl residues. It plays a role in the repair and/or degradation of damaged proteins. The sequence is that of Protein-L-isoaspartate O-methyltransferase from Shewanella baltica (strain OS195).